The following is a 510-amino-acid chain: NAD(P)H-quinone oxidoreductase subunit 2, chloroplastic (510 aa).

The next 13 helical transmembrane spans lie at 28 to 48, 57 to 77, 99 to 119, 124 to 144, 149 to 169, 183 to 203, 227 to 247, 295 to 315, 323 to 343, 354 to 374, 395 to 415, 418 to 438, and 484 to 504; these read DGSF…LLII, IPWL…TLLF, IFQF…VEYI, MALT…MFLC, LITI…LSGY, YLLM…WLYG, PGIS…LSPA, WHLL…LIAI, MLAY…IVGD, YMLF…LFGL, ALSL…AGFF, LYLF…IGLL, and MIVC…IIAI.

This sequence belongs to the complex I subunit 2 family. NDH is composed of at least 16 different subunits, 5 of which are encoded in the nucleus.

The protein localises to the plastid. Its subcellular location is the chloroplast thylakoid membrane. The enzyme catalyses a plastoquinone + NADH + (n+1) H(+)(in) = a plastoquinol + NAD(+) + n H(+)(out). It catalyses the reaction a plastoquinone + NADPH + (n+1) H(+)(in) = a plastoquinol + NADP(+) + n H(+)(out). In terms of biological role, NDH shuttles electrons from NAD(P)H:plastoquinone, via FMN and iron-sulfur (Fe-S) centers, to quinones in the photosynthetic chain and possibly in a chloroplast respiratory chain. The immediate electron acceptor for the enzyme in this species is believed to be plastoquinone. Couples the redox reaction to proton translocation, and thus conserves the redox energy in a proton gradient. This Silene latifolia (White campion) protein is NAD(P)H-quinone oxidoreductase subunit 2, chloroplastic.